Reading from the N-terminus, the 278-residue chain is Release factor glutamine methyltransferase (278 aa).

S-adenosyl-L-methionine is bound by residues 116–120, Asp139, Trp168, and Asn182; that span reads GTGTG. 182–185 is a binding site for substrate; it reads NPPY.

This sequence belongs to the protein N5-glutamine methyltransferase family. PrmC subfamily.

The enzyme catalyses L-glutaminyl-[peptide chain release factor] + S-adenosyl-L-methionine = N(5)-methyl-L-glutaminyl-[peptide chain release factor] + S-adenosyl-L-homocysteine + H(+). Functionally, methylates the class 1 translation termination release factors RF1/PrfA and RF2/PrfB on the glutamine residue of the universally conserved GGQ motif. The sequence is that of Release factor glutamine methyltransferase from Cereibacter sphaeroides (strain ATCC 17023 / DSM 158 / JCM 6121 / CCUG 31486 / LMG 2827 / NBRC 12203 / NCIMB 8253 / ATH 2.4.1.) (Rhodobacter sphaeroides).